The chain runs to 233 residues: MADNKAKKEQVHDVFQNISGKYDRLNNIISFEQHKTWRKRVMKEMNVKSGSKALDVCCGTADWTISLSKAVGHTGEVIGVDFSENMLEVGKRKTKDMHNIQLVHGDAMNLPFEDNEFDYVTIGFGLRNVPDYLATLKELNRVLKPGGMIVCLETSQPTTPVFKQCYKLYFKFVMPIFGKIFAKSKDEYEWLQQSTFNFPDKEKLKRLFNQAGFSNVKVRSFTGGVAAMHLGYK.

Residues Thr-60, Asp-81, and 106–107 contribute to the S-adenosyl-L-methionine site; that span reads DA.

This sequence belongs to the class I-like SAM-binding methyltransferase superfamily. MenG/UbiE family.

It carries out the reaction a 2-demethylmenaquinol + S-adenosyl-L-methionine = a menaquinol + S-adenosyl-L-homocysteine + H(+). It functions in the pathway quinol/quinone metabolism; menaquinone biosynthesis; menaquinol from 1,4-dihydroxy-2-naphthoate: step 2/2. Functionally, methyltransferase required for the conversion of demethylmenaquinol (DMKH2) to menaquinol (MKH2). The chain is Demethylmenaquinone methyltransferase from Staphylococcus saprophyticus subsp. saprophyticus (strain ATCC 15305 / DSM 20229 / NCIMB 8711 / NCTC 7292 / S-41).